The chain runs to 28 residues: Conotoxin de7b (28 aa).

3 disulfide bridges follow: Cys2–Cys18, Cys9–Cys22, and Cys17–Cys27. Pro4 is modified (4-hydroxyproline; partial). 4-carboxyglutamate; partial is present on Glu7. Pro14 carries the post-translational modification 4-hydroxyproline; partial.

In terms of tissue distribution, expressed by the venom duct.

It is found in the secreted. Its function is as follows. May inhibit sodium (Nav) or calcium channels (Cav). This is Conotoxin de7b from Conasprella delessertii (Sozon's cone).